Here is a 276-residue protein sequence, read N- to C-terminus: Ribosomal RNA small subunit methyltransferase A (276 aa).

H15, L17, G42, E64, D89, and N108 together coordinate S-adenosyl-L-methionine.

Belongs to the class I-like SAM-binding methyltransferase superfamily. rRNA adenine N(6)-methyltransferase family. RsmA subfamily.

It is found in the cytoplasm. It carries out the reaction adenosine(1518)/adenosine(1519) in 16S rRNA + 4 S-adenosyl-L-methionine = N(6)-dimethyladenosine(1518)/N(6)-dimethyladenosine(1519) in 16S rRNA + 4 S-adenosyl-L-homocysteine + 4 H(+). Functionally, specifically dimethylates two adjacent adenosines (A1518 and A1519) in the loop of a conserved hairpin near the 3'-end of 16S rRNA in the 30S particle. May play a critical role in biogenesis of 30S subunits. The chain is Ribosomal RNA small subunit methyltransferase A from Prochlorococcus marinus (strain MIT 9515).